Consider the following 1846-residue polypeptide: Insulin-like receptor (1846 aa).

3 N-linked (GlcNAc...) asparagine glycosylation sites follow: Asn113, Asn180, and Asn364. 5 disulfides stabilise this stretch: Cys371-Cys386, Cys393-Cys401, Cys397-Cys410, Cys413-Cys422, and Cys426-Cys438. An N-linked (GlcNAc...) asparagine glycan is attached at Asn453. 2 disulfides stabilise this stretch: Cys469–Cys483 and Cys486–Cys490. The N-linked (GlcNAc...) asparagine glycan is linked to Asn518. Cys615 and Cys646 are oxidised to a cystine. Asn652, Asn671, and Asn696 each carry an N-linked (GlcNAc...) asparagine glycan. Fibronectin type-III domains follow at residues 775-869 (TPDP…TMMG), 969-1067 (KPSS…LKRT), and 1077-1179 (LNET…TPGF). The disordered stretch occupies residues 944–980 (EKAENLGKAPKTLGGKKPLIHISKKKPSSSSTTSTPA). Over residues 961–970 (PLIHISKKKP) the composition is skewed to basic residues. The Extracellular portion of the chain corresponds to 970 to 1183 (PSSSSTTSTP…VMTPGFFTVE (214 aa)). Residues 971–980 (SSSSTTSTPA) are compositionally biased toward low complexity. Residues Asn1017, Asn1047, Asn1078, Asn1087, and Asn1093 are each glycosylated (N-linked (GlcNAc...) asparagine). The helical transmembrane segment at 1184 to 1204 (IILGMLLVFLILMSIAGCIIY) threads the bilayer. At 1205 to 1846 (YYIQVRYGKK…IEDNEHHPLV (642 aa)) the chain is on the cytoplasmic side. One can recognise a Protein kinase domain in the interval 1246–1528 (VVLGQQCGEG…LLAAEASPEF (283 aa)). Residues 1252–1260 (CGEGSFGKV) and Lys1282 each bind ATP. Asp1388 acts as the Proton acceptor in catalysis. Disordered regions lie at residues 1718–1742 (ISSM…TNWS) and 1769–1826 (QQQQ…IFNG). The span at 1726 to 1742 (STGASSSSYGVPQTNWS) shows a compositional bias: polar residues. Over residues 1808–1821 (YRNNGSPSRNGNSR) the composition is skewed to low complexity.

Belongs to the protein kinase superfamily. Tyr protein kinase family. Insulin receptor subfamily. In terms of assembly, tetramer of 2 alpha and 2 beta chains linked by disulfide bonds. The alpha chains contribute to the formation of the ligand-binding domain, while the beta chains carry the kinase domain. Interacts (via cytoplasmic domain) with shc-1 (PID domain). Interacts (via kinase domain) with daf-18 (via C-terminus). Interacts with casy-1; promoting axonal localization. Mg(2+) serves as cofactor.

It localises to the membrane. Its subcellular location is the cell projection. The protein localises to the axon. The enzyme catalyses L-tyrosyl-[protein] + ATP = O-phospho-L-tyrosyl-[protein] + ADP + H(+). Autophosphorylation activates the kinase activity. Interaction with shc-1 may inhibit its activity. In terms of biological role, insulin receptor-like tyrosine kinase which regulates metabolism, controls longevity and prevents developmental arrest at the dauer stage. Binding of INS family members may either stimulate, or antagonize, association of the receptor with downstream mediators such as pdk-1 and age-1. Required for germline progenitor proliferation during larval development. Plays a role in maintaining gonad integrity in a daf-16/FOXO-dependent manner. Required for the response to environmental stimuli such as light, food, pheromone, and temperature. Negatively regulates resistance to UV and oxidative stress. In a daf-16/FOXO-dependent manner, plays a role in regulating the response to white light. Role in immune function and pathogen resistance. Negatively regulates autophagy. Regulates daf-18/PTEN protein levels. Plays a role in controlling seam cell development during the larval stages. Its function is as follows. Required for taste avoidance learning in the cell body of ASER gustatory neurons. Required for taste avoidance learning in axons of ASER gustatory neurons. This Caenorhabditis elegans protein is Insulin-like receptor.